The sequence spans 90 residues: Progonadoliberin-1 (90 aa).

An N-terminal signal peptide occupies residues methionine 1–serine 21. Pyrrolidone carboxylic acid is present on glutamine 22. Position 31 is a glycine amide (glycine 31).

The protein belongs to the GnRH family. Post-translationally, the precursor is cleaved by ACE, which removes the Gly-Lys-Arg peptide at the C-terminus, leading to mature hormone. The mature form of Gonadoliberin-1 is also cleaved and degraded by ACE.

The protein resides in the secreted. Its function is as follows. Stimulates the secretion of gonadotropins; it stimulates the secretion of both luteinizing and follicle-stimulating hormones. This Mus musculus (Mouse) protein is Progonadoliberin-1 (Gnrh1).